Here is a 223-residue protein sequence, read N- to C-terminus: Translation initiation factor 6 (223 aa).

It belongs to the eIF-6 family.

Binds to the 50S ribosomal subunit and prevents its association with the 30S ribosomal subunit to form the 70S initiation complex. The protein is Translation initiation factor 6 of Methanobrevibacter smithii (strain ATCC 35061 / DSM 861 / OCM 144 / PS).